Here is a 772-residue protein sequence, read N- to C-terminus: MSLFNKVTKSFQWGDKTVVMETGEIARQASGAVVVDIDGTVILATVVASKTAKPGQDFFPLTVDYIEKTYAAGKIPGSFFKREAKPSEHETLTSRLIDRPIRPLFPEGFLNEVHVVIHTLSLNPEVDADIAAMIGVSAALSISGIPFSGPIGAARVGYINGQYVLNPGQTARKDSQMDLVVAGTEAAVLMVESEAQQLSEEIMLGGVVFGHEQANIAINAIHELVRDAGKPVWDWQAPAEDEAFVAKVKSLAEEKLRAVYQIRSKQARTQALREANASVMNTLKESGEPFDAGKVNDLLFAIESKIVRSQILSGEPRIDGRDTRTVRPIEIRNSVLPRTHGSALFTRGETQGLVVTTLGTERDAQRIDALAGEYEDRFLFHYNMPPFATGEVGRMGSTKRREIGHGRLAKRALVAVLPTKEEFPYTIRVVSEITESNGSSSMASVCGGCLSMMDAGVPMKAHVAGIAMGLIKEDNRFAVLTDILGDEDHLGDMDFKVAGTTNGITALQMDIKIQGITKEIMQVALAQAKEARMHILGKMQEAMGEAKTEVSQFAPRLTTLKINPEKIRDVIGKGGAVIRGLQEETGTTINIDEDGTITIASTDPEKAEFAKKRIEQITAEVEIGKVYEGPVTKILDFGALINLLPGKDGLLHISQIAHERVEKVTDYLSEGQIVKVKVLETDEKGRVKLSMKALTERPAGMEYSERPPREDRGDRGDRGGERRERSDRGDRGGDRGERAPRFNSEQQQQPRSNEQQPAPVGEQPYAPRDSQE.

Positions 488 and 494 each coordinate Mg(2+). The KH domain maps to 555–614; that stretch reads PRLTTLKINPEKIRDVIGKGGAVIRGLQEETGTTINIDEDGTITIASTDPEKAEFAKKRI. Residues 624–692 enclose the S1 motif domain; that stretch reads GKVYEGPVTK…EKGRVKLSMK (69 aa). The segment at 690 to 772 is disordered; sequence SMKALTERPA…QPYAPRDSQE (83 aa). Residues 703-740 are compositionally biased toward basic and acidic residues; sequence YSERPPREDRGDRGDRGGERRERSDRGDRGGDRGERAP. A compositionally biased stretch (low complexity) spans 743-757; it reads NSEQQQQPRSNEQQP.

Belongs to the polyribonucleotide nucleotidyltransferase family. Mg(2+) is required as a cofactor.

The protein resides in the cytoplasm. It catalyses the reaction RNA(n+1) + phosphate = RNA(n) + a ribonucleoside 5'-diphosphate. In terms of biological role, involved in mRNA degradation. Catalyzes the phosphorolysis of single-stranded polyribonucleotides processively in the 3'- to 5'-direction. The sequence is that of Polyribonucleotide nucleotidyltransferase from Variovorax paradoxus (strain S110).